The sequence spans 89 residues: Small ribosomal subunit protein uS15 (89 aa).

Belongs to the universal ribosomal protein uS15 family. Part of the 30S ribosomal subunit. Forms a bridge to the 50S subunit in the 70S ribosome, contacting the 23S rRNA.

Functionally, one of the primary rRNA binding proteins, it binds directly to 16S rRNA where it helps nucleate assembly of the platform of the 30S subunit by binding and bridging several RNA helices of the 16S rRNA. Its function is as follows. Forms an intersubunit bridge (bridge B4) with the 23S rRNA of the 50S subunit in the ribosome. The polypeptide is Small ribosomal subunit protein uS15 (Roseobacter denitrificans (strain ATCC 33942 / OCh 114) (Erythrobacter sp. (strain OCh 114))).